The primary structure comprises 507 residues: FLYWCH transcription factor 1 (507 aa).

Residues methionine 1–serine 26 are compositionally biased toward low complexity. The segment at methionine 1–alanine 51 is disordered. The FLYWCH-type zinc finger occupies lysine 135–histidine 192.

Functionally, probable transcription factor. Binds to the DNA sequence motif 5'-[AG]GGCGCCG-3' in the promoters of target genes, including micro-RNA genes, in order to repress expression, and acting redundantly with flh-2. This is FLYWCH transcription factor 1 from Caenorhabditis elegans.